A 356-amino-acid polypeptide reads, in one-letter code: Glutamine synthetase cytosolic isozyme 2 (356 aa).

One can recognise a GS beta-grasp domain in the interval 19–99 (IIAEYIWIGG…VMCDTYTPAG (81 aa)). Residues 106-356 (KRHNAAKIFS…IAESTILWKP (251 aa)) enclose the GS catalytic domain.

It belongs to the glutamine synthetase family. Homooctamer.

It localises to the cytoplasm. It catalyses the reaction L-glutamate + NH4(+) + ATP = L-glutamine + ADP + phosphate + H(+). The sequence is that of Glutamine synthetase cytosolic isozyme 2 (GS1-2) from Vitis vinifera (Grape).